Consider the following 938-residue polypeptide: MVRKMSEQKDYKNTLNLPETGFPMRGDLAKREPGMLKNWYDNDLYQKIRQSSKGKKSFILHDGPPYANGSIHIGHAVNKILKDIIIKSKTALGFDSPYIPGWDCHGLPIELKVEGLVGKPNQKISAAQFREECRKYAREQVEGQKKDFIRLGVLGDWDNPYLTMNFDTEANIIRAFGKAVANGHLYKGSKPVHWCLDCASSLAEAEVEYEDRTSPSIYVRFAAADESAVENKFVLTEQGKGKLSAVIWTTTPWTLPSNKAISINPELEYQIVQFGDERFILAAELVESVAQAVGVESWKALGSAKGSDLELLQFKHPFYDYNVPFILGDHVTLDGGTGLVHTAPDHGQDDYVVARKYNIGMAGLIGNDGKFNSNAKFFAGLGVFEANGKVLEKLDEVGALLKLEKIRHSYPHCWRHKTPIIFRATPQWFIGMETQGLRQQALSEIKKVRWIPDWGQARIEKMVENRPDWCISRQRTWGVPVALFIHKETEQLHPRTLELIEEVAKLVERKGIQAWWDLDAKDLLGDDAAHYSKVPDTLDVWFDSGSTYYSVVKNRPEFNGKEADMYLEGSDQHRGWFMSSLMLSTATDNKAPYKQVLTHGFTVDGQGRKMSKSIGNIVTPQEVMDKFGGDILRLWVASTDYTGEMTVSDEILKRAADSYRRIRNTARFLLANLNGFDPKRDLVQAHEMISLDRWAVDCAFRAQAEIKEAYDNYQFHTVVQRLMKFCSVEMGSFYLDIIKDRQYTTKADSLARRSCQTALWHIAEALVRWMAPILSFTADEIWGYLPGERGEFVFTEEFYDGLFALDVSESLDDAYWQQVITVRNEVNRVLEQARNDKVIGGGLEAEVTIFANDEYSALLNKLGNELRFVTITSKAEVKTLADADVAEGEVAGLAIKAIRSANHKCPRCWHYSDSKDANSLCSRCEENVNGNGEERRFA.

Positions 65 to 75 (PYANGSIHIGH) match the 'HIGH' region motif. Glu-568 serves as a coordination point for L-isoleucyl-5'-AMP. The short motif at 609–613 (KMSKS) is the 'KMSKS' region element. ATP is bound at residue Lys-612. Positions 905, 908, 921, and 924 each coordinate Zn(2+).

Belongs to the class-I aminoacyl-tRNA synthetase family. IleS type 1 subfamily. Monomer. The cofactor is Zn(2+).

The protein resides in the cytoplasm. It catalyses the reaction tRNA(Ile) + L-isoleucine + ATP = L-isoleucyl-tRNA(Ile) + AMP + diphosphate. Its function is as follows. Catalyzes the attachment of isoleucine to tRNA(Ile). As IleRS can inadvertently accommodate and process structurally similar amino acids such as valine, to avoid such errors it has two additional distinct tRNA(Ile)-dependent editing activities. One activity is designated as 'pretransfer' editing and involves the hydrolysis of activated Val-AMP. The other activity is designated 'posttransfer' editing and involves deacylation of mischarged Val-tRNA(Ile). In Mannheimia succiniciproducens (strain KCTC 0769BP / MBEL55E), this protein is Isoleucine--tRNA ligase.